Here is a 151-residue protein sequence, read N- to C-terminus: Chaperonin GroEL (151 aa).

An ATP-binding site is contributed by 41-45 (DGTTT).

The protein belongs to the chaperonin (HSP60) family. Forms a cylinder of 14 subunits composed of two heptameric rings stacked back-to-back. Interacts with the co-chaperonin GroES.

It localises to the cytoplasm. The catalysed reaction is ATP + H2O + a folded polypeptide = ADP + phosphate + an unfolded polypeptide.. Functionally, together with its co-chaperonin GroES, plays an essential role in assisting protein folding. The GroEL-GroES system forms a nano-cage that allows encapsulation of the non-native substrate proteins and provides a physical environment optimized to promote and accelerate protein folding. The polypeptide is Chaperonin GroEL (Mycobacteroides chelonae (Mycobacterium chelonae)).